Here is a 415-residue protein sequence, read N- to C-terminus: Squalene synthase 10 (415 aa).

2 helical membrane-spanning segments follow: residues Ala-281–Phe-301 and Leu-392–Pro-412.

The protein belongs to the phytoene/squalene synthase family. Requires Mg(2+) as cofactor. Mn(2+) is required as a cofactor.

It is found in the endoplasmic reticulum membrane. The enzyme catalyses 2 (2E,6E)-farnesyl diphosphate + NADH + H(+) = squalene + 2 diphosphate + NAD(+). The catalysed reaction is 2 (2E,6E)-farnesyl diphosphate + NADPH + H(+) = squalene + 2 diphosphate + NADP(+). Its pathway is terpene metabolism; lanosterol biosynthesis; lanosterol from farnesyl diphosphate: step 1/3. Its function is as follows. Component of the triterpene saponins (e.g. ginsenosides or panaxosides) and phytosterols biosynthetic pathways. Catalyzes the biosynthesis of squalene. The polypeptide is Squalene synthase 10 (Panax ginseng (Korean ginseng)).